Here is a 543-residue protein sequence, read N- to C-terminus: CTP synthase (543 aa).

The interval methionine 1 to isoleucine 270 is amidoligase domain. Position 18 (serine 18) interacts with CTP. Serine 18 lines the UTP pocket. Residues serine 19–leucine 24 and aspartate 76 contribute to the ATP site. Mg(2+) is bound by residues aspartate 76 and glutamate 144. CTP is bound by residues aspartate 151 to glutamate 153, lysine 191 to glutamine 196, and lysine 227. UTP-binding positions include lysine 191–glutamine 196 and lysine 227. The 243-residue stretch at threonine 295–threonine 537 folds into the Glutamine amidotransferase type-1 domain. Residue glycine 356 coordinates L-glutamine. The Nucleophile; for glutamine hydrolysis role is filled by cysteine 383. L-glutamine is bound by residues methionine 384–glutamine 387, glutamate 407, and arginine 462. Active-site residues include histidine 510 and glutamate 512.

The protein belongs to the CTP synthase family. In terms of assembly, homotetramer.

It catalyses the reaction UTP + L-glutamine + ATP + H2O = CTP + L-glutamate + ADP + phosphate + 2 H(+). The catalysed reaction is L-glutamine + H2O = L-glutamate + NH4(+). The enzyme catalyses UTP + NH4(+) + ATP = CTP + ADP + phosphate + 2 H(+). It participates in pyrimidine metabolism; CTP biosynthesis via de novo pathway; CTP from UDP: step 2/2. With respect to regulation, allosterically activated by GTP, when glutamine is the substrate; GTP has no effect on the reaction when ammonia is the substrate. The allosteric effector GTP functions by stabilizing the protein conformation that binds the tetrahedral intermediate(s) formed during glutamine hydrolysis. Inhibited by the product CTP, via allosteric rather than competitive inhibition. In terms of biological role, catalyzes the ATP-dependent amination of UTP to CTP with either L-glutamine or ammonia as the source of nitrogen. Regulates intracellular CTP levels through interactions with the four ribonucleotide triphosphates. The protein is CTP synthase of Ehrlichia ruminantium (strain Gardel).